The primary structure comprises 1183 residues: MYLSKIELFGFKSFAHRVRIHFDKGLTAIVGPNGCGKTNVVDAIRWVLGEQKSMLLRSPKMENIIFNGTKRLKPLSFTEVSITIENTRNILPTEYTEVTVTRRLYRNGDSDYLLNMVPCRLKDILDLFADTGMGSDAYSVIELKMIEEIISNKSEERLKLFEEAAGITRYKQRRKQTFRQLESASRDLARVDDVLAEVEKKVRNLRLQVRKAERLKEIREELRTLDLTLSAISMDEHLQKLRPLLDSIAAEERQCHELAATIAKLDSAHQESELRQLELERKLADAQKELNASNQLVHTLEKQLLQHKEKQKNLLQTIERLNYSIADKGRKRLEQEALSKELSEKQTPLQEVCTAQLAEFERLKKQEVELNSALDASRQALQSERRAVAELQKSLNALNLTRQSLRTRKEHLEGSVNRLDQRKRDLERSMEQAEPERRRTSEAIEEKKIALDELKKEEERLVALKASITEQSEKKKEELLSLKSEHNHLNNRIALCNSILEKFEGLPEGVAFLEKQRAGKPGLGCLSDLISVRENDKKAINAALGESLGYYLCRNLEEARLAVSSLAKADKGKVHFLILDLIDGGAKIDYAEIEGARRAIDLVETPAELSKALNLLLQHCYVVADLDAAEQLGKKHPEALFITEKGEKFTRRGMLYGGSAKGGESVRLGKKAERDRLQKQMAGMAETIAEAENALAVLRKEFSAIDTERVKRAAASISQEISALEKRLARLEAEERSGADQIAHADRERTALIASMQSVLDELEKTQPETLRIEAEIETAQQKVNVMQEELSAGESRSRALHAELQAQQGRYRDAQLDLEKHRFRASACQQTIVTLSDEIEGMQHQIARAEKEVAELGQSIAQATAEHEQAVVVSARQQEALNELESSYRDLQTKNHDTLSNLRDLRRKHDLSQQMLAEFNNRKAKLEQEIAHLQATVMERYGVELEMMPAHVPEGFDVAASRERLAYLQKQKEQFGGVNELALEEYESEKERLDFLTAQKEDLVSAEKQLRETIEEINRTALEKFRETFNQVRKNFIRIFHDLFDPEDEVDLLITTSDEDPLEAHIQIVAKPRGKKPLAIEQLSGGEKALTALSLLFAIYLVKPSPFCILDEVDAPLDDANVGRFIKLLKKFENNTQFIIVTHNKKSMASCQALYGVTMEEEGVSKLIPVKIENARSEETAS.

32–39 (PNGCGKTN) serves as a coordination point for ATP. Coiled coils occupy residues 167–322 (ITRY…ERLN) and 358–497 (AEFE…ALCN). The tract at residues 409–442 (KEHLEGSVNRLDQRKRDLERSMEQAEPERRRTSE) is disordered. Positions 419–442 (LDQRKRDLERSMEQAEPERRRTSE) are enriched in basic and acidic residues. Residues 523-632 (LGCLSDLISV…VADLDAAEQL (110 aa)) form the SMC hinge domain. Coiled-coil stretches lie at residues 669 to 941 (GKKA…VMER) and 980 to 1025 (NELA…ALEK).

Belongs to the SMC family. Homodimer.

The protein resides in the cytoplasm. Required for chromosome condensation and partitioning. In Chlorobaculum tepidum (strain ATCC 49652 / DSM 12025 / NBRC 103806 / TLS) (Chlorobium tepidum), this protein is Chromosome partition protein Smc.